Consider the following 101-residue polypeptide: Small ubiquitin-related modifier 5 (101 aa).

Residues 17–21 (IKDED) carry the Required for PML-NB formation motif. Residue Lys-18 forms a Glycyl lysine isopeptide (Lys-Gly) (interchain with G-Cter in SUMO1P1/SUMO5) linkage. The region spanning 20-97 (EDIKLRVIGQ…IEVYQEQIGG (78 aa)) is the Ubiquitin-like domain. Gly-97 is covalently cross-linked (Glycyl lysine isopeptide (Gly-Lys) (interchain with K-? in acceptor proteins)). Residues 98 to 101 (HSTV) constitute a propeptide that is removed on maturation.

This sequence belongs to the ubiquitin family. SUMO subfamily. As to quaternary structure, interacts with CBX4. Interacts with PIAS1. Found in a complex with SAE2. Interacts with UBE2I. Interacts with SP100. Interacts with HIPK2. Interacts with DAXX. Interacts with PML-RARA oncoprotein; PML-RARalpha outcompetes PML for SUMO1P1/SUMO5 conjugation. In terms of processing, cleavage of precursor form is necessary for function. Post-translationally, autosumoylated at Lys-18. High expression levels in testes and peripheral blood leukocyte. Expressed also in lung, placenta, liver, spleen and thymus.

It localises to the nucleus. In terms of biological role, ubiquitin-like protein that can be covalently attached to proteins as a monomer or as a lysine-linked polymer. Regulates the life cycle of promyelocytic leukemia nuclear bodies (PML-NBs). PolySUMO1P1/SUMO5 conjugation on 'Lys-160' of PML facilitates recruitment of PML-NB components, which enlarges PML-NB. SUMO1P1/SUMO5 also increases polySUMO2/3 conjugation of PML, resulting in RNF4-mediated disruption of PML-NBs. This chain is Small ubiquitin-related modifier 5, found in Homo sapiens (Human).